A 179-amino-acid chain; its full sequence is Tetratricopeptide repeat protein 36 (179 aa).

TPR repeat units lie at residues 43-76 (SLQLEREGVALAEGVRLDEAIEKFTKALEVCPKN), 78-110 (SAYNNRAQAYRLQNKPEKALDDLNEALSLAGPK), and 115-148 (CQAYVQRASIYRLRGDDDKARTDFASAAELGSSF).

This sequence belongs to the TTC36 family.

This chain is Tetratricopeptide repeat protein 36, found in Caenorhabditis elegans.